A 95-amino-acid chain; its full sequence is Succinate dehydrogenase membrane anchor subunit (95 aa).

Residues 1 to 19 (MYKTLLAQVFFHSIAKKKL) lie on the Mitochondrial matrix side of the membrane. The helical transmembrane segment at 20-40 (YFFWLPRLFSLLLVPGFLFDI) threads the bilayer. Position 41 (glutamate 41) is a topological domain, mitochondrial intermembrane. A helical transmembrane segment spans residues 42–62 (ILFLFHPIILLHASLGLSVII). Position 53 (histidine 53) interacts with heme. The Mitochondrial matrix segment spans residues 63–74 (EDYIHIETIKFQ). Tyrosine 65 is an a ubiquinone binding site. Residues 75–95 (YLSLIKLLLVLLINLNILYLL) traverse the membrane as a helical segment.

Part of an enzyme complex containing four subunits: a flavoprotein, an iron-sulfur protein, plus two membrane-anchoring proteins. The cofactor is heme.

It localises to the mitochondrion inner membrane. Its pathway is carbohydrate metabolism; tricarboxylic acid cycle. In terms of biological role, membrane-anchoring subunit of succinate dehydrogenase (SDH). This Porphyra purpurea (Red seaweed) protein is Succinate dehydrogenase membrane anchor subunit (SDH4).